A 373-amino-acid polypeptide reads, in one-letter code: Flagellar P-ring protein 1 (373 aa).

A signal peptide spans 1 to 25 (MKPINTFFSSFLLALTLGLPATSQA).

This sequence belongs to the FlgI family. As to quaternary structure, the basal body constitutes a major portion of the flagellar organelle and consists of four rings (L,P,S, and M) mounted on a central rod.

The protein localises to the periplasm. Its subcellular location is the bacterial flagellum basal body. Its function is as follows. Assembles around the rod to form the L-ring and probably protects the motor/basal body from shearing forces during rotation. The protein is Flagellar P-ring protein 1 of Vibrio parahaemolyticus serotype O3:K6 (strain RIMD 2210633).